Consider the following 737-residue polypeptide: Procollagen-lysine,2-oxoglutarate 5-dioxygenase 2 (737 aa).

The first 25 residues, 1–25 (MGDRGARPGRLMPMLALLSWAAGLG), serve as a signal peptide directing secretion. 2 N-linked (GlcNAc...) asparagine glycosylation sites follow: Asn-63 and Asn-209. Phosphothreonine is present on Thr-320. Residue Tyr-323 is modified to Phosphotyrosine. Asn-365 and Asn-522 each carry an N-linked (GlcNAc...) asparagine glycan. A Fe2OG dioxygenase domain is found at 644–737 (KGFALLNFVV…RYIAVSFIDP (94 aa)). His-666 and Asp-668 together coordinate Fe cation. Asn-696 carries an N-linked (GlcNAc...) asparagine glycan. At Lys-704 the chain carries N6-succinyllysine. His-718 is a Fe cation binding site. N-linked (GlcNAc...) asparagine glycosylation is present at Asn-725. Arg-728 is a catalytic residue.

In terms of assembly, homodimer. It depends on Fe(2+) as a cofactor. The cofactor is L-ascorbate. As to expression, is highly expressed in the heart, lung, kidney, eye, ovary and placenta.

The protein resides in the rough endoplasmic reticulum membrane. It catalyses the reaction L-lysyl-[collagen] + 2-oxoglutarate + O2 = (5R)-5-hydroxy-L-lysyl-[collagen] + succinate + CO2. Functionally, forms hydroxylysine residues in -Xaa-Lys-Gly- sequences in collagens. These hydroxylysines serve as sites of attachment for carbohydrate units and are essential for the stability of the intermolecular collagen cross-links. The sequence is that of Procollagen-lysine,2-oxoglutarate 5-dioxygenase 2 (Plod2) from Mus musculus (Mouse).